A 78-amino-acid chain; its full sequence is Probable Fe(2+)-trafficking protein (78 aa).

The protein belongs to the Fe(2+)-trafficking protein family. As to quaternary structure, monomer.

In terms of biological role, could be a mediator in iron transactions between iron acquisition and iron-requiring processes, such as synthesis and/or repair of Fe-S clusters in biosynthetic enzymes. The protein is Probable Fe(2+)-trafficking protein of Wigglesworthia glossinidia brevipalpis.